We begin with the raw amino-acid sequence, 555 residues long: Membrane protein insertase YidC (555 aa).

A helical membrane pass occupies residues 7–24 (ILWVIFSMSLVLLYDNWQ). The interval 62–81 (APGAAGTAAPAAPQAAAQPT) is disordered. A run of 5 helical transmembrane segments spans residues 334–354 (LELVKDYGWLTILAKPLFWLL), 360–380 (FLGNWGWSIIALTVLIKLVFF), 430–450 (LGGCLPIVIQIPVFIALYWVL), 468–488 (LSVPDPFYILPIVMAVSMFVQ), and 503–523 (VMMIMPLVFSVMFFFFPAGLV).

Belongs to the OXA1/ALB3/YidC family. Type 1 subfamily. Interacts with the Sec translocase complex via SecD. Specifically interacts with transmembrane segments of nascent integral membrane proteins during membrane integration.

It localises to the cell inner membrane. Functionally, required for the insertion and/or proper folding and/or complex formation of integral membrane proteins into the membrane. Involved in integration of membrane proteins that insert both dependently and independently of the Sec translocase complex, as well as at least some lipoproteins. Aids folding of multispanning membrane proteins. This is Membrane protein insertase YidC from Cupriavidus necator (strain ATCC 17699 / DSM 428 / KCTC 22496 / NCIMB 10442 / H16 / Stanier 337) (Ralstonia eutropha).